Consider the following 288-residue polypeptide: Syntaxin-1B (288 aa).

Basic and acidic residues predominate over residues methionine 1–aspartate 13. A disordered region spans residues methionine 1–valine 20. At methionine 1–lysine 264 the chain is on the cytoplasmic side. Phosphoserine is present on residues serine 10 and serine 14. Residues methionine 29–glycine 104 adopt a coiled-coil conformation. The t-SNARE coiled-coil homology domain occupies leucine 191–alanine 253. A helical; Anchor for type IV membrane protein membrane pass occupies residues isoleucine 265–leucine 288.

The protein belongs to the syntaxin family. Interacts with OTOF. Interacts with SYT6 and SYT8; the interaction is Ca(2+)-dependent. Post-translationally, phosphorylated by CK2. In terms of processing, (Microbial infection) Targeted and hydrolyzed by C.botulinum neurotoxin type C (BoNT/C); cleavage by BoNT/C inhibits neurotransmitter release. Probably hydrolyzes the 252-Lys-|-Ala-253 bond.

Its subcellular location is the membrane. Potentially involved in docking of synaptic vesicles at presynaptic active zones. May mediate Ca(2+)-regulation of exocytosis acrosomal reaction in sperm. This chain is Syntaxin-1B (STX1B), found in Bos taurus (Bovine).